The sequence spans 513 residues: ATP synthase subunit alpha (513 aa).

An ATP-binding site is contributed by 169 to 176; it reads GDRQTGKT.

It belongs to the ATPase alpha/beta chains family. F-type ATPases have 2 components, CF(1) - the catalytic core - and CF(0) - the membrane proton channel. CF(1) has five subunits: alpha(3), beta(3), gamma(1), delta(1), epsilon(1). CF(0) has three main subunits: a(1), b(2) and c(9-12). The alpha and beta chains form an alternating ring which encloses part of the gamma chain. CF(1) is attached to CF(0) by a central stalk formed by the gamma and epsilon chains, while a peripheral stalk is formed by the delta and b chains.

It is found in the cell inner membrane. The catalysed reaction is ATP + H2O + 4 H(+)(in) = ADP + phosphate + 5 H(+)(out). Its function is as follows. Produces ATP from ADP in the presence of a proton gradient across the membrane. The alpha chain is a regulatory subunit. The polypeptide is ATP synthase subunit alpha (Salmonella paratyphi C (strain RKS4594)).